We begin with the raw amino-acid sequence, 301 residues long: Probable actin-related protein 2/3 complex subunit 2 (301 aa).

This sequence belongs to the ARPC2 family. In terms of assembly, component of the Arp2/3 complex, at least composed of arx-1, arx-2, arx-4 and arx-6.

Its subcellular location is the cytoplasm. The protein localises to the cytoskeleton. Its function is as follows. Functions as actin-binding component of the Arp2/3 complex which is involved in regulation of actin polymerization and together with an activating nucleation-promoting factor (NPF) mediates the formation of branched actin networks. Seems to contact the mother actin filament. Plays a role in time-dependent memory loss and the retention of conditioned behavior over time. In Caenorhabditis elegans, this protein is Probable actin-related protein 2/3 complex subunit 2.